The chain runs to 425 residues: uncharacterized protein (425 aa).

To K.pneumoniae SorE.

This is an uncharacterized protein from Escherichia coli (strain K12).